The primary structure comprises 410 residues: Arginine biosynthesis bifunctional protein ArgJ (410 aa).

Substrate contacts are provided by Thr160, Lys186, Thr197, Glu283, Asn405, and Thr410. The Nucleophile role is filled by Thr197.

It belongs to the ArgJ family. Heterotetramer of two alpha and two beta chains.

It localises to the cytoplasm. The catalysed reaction is N(2)-acetyl-L-ornithine + L-glutamate = N-acetyl-L-glutamate + L-ornithine. It carries out the reaction L-glutamate + acetyl-CoA = N-acetyl-L-glutamate + CoA + H(+). The protein operates within amino-acid biosynthesis; L-arginine biosynthesis; L-ornithine and N-acetyl-L-glutamate from L-glutamate and N(2)-acetyl-L-ornithine (cyclic): step 1/1. It functions in the pathway amino-acid biosynthesis; L-arginine biosynthesis; N(2)-acetyl-L-ornithine from L-glutamate: step 1/4. Competitively inhibited by L-ornithine. Its function is as follows. Catalyzes two activities which are involved in the cyclic version of arginine biosynthesis: the synthesis of N-acetylglutamate from glutamate and acetyl-CoA as the acetyl donor, and of ornithine by transacetylation between N(2)-acetylornithine and glutamate. The protein is Arginine biosynthesis bifunctional protein ArgJ of Geobacillus stearothermophilus (Bacillus stearothermophilus).